The primary structure comprises 235 residues: Probable carboxylesterase Os04g0669600 (235 aa).

Active-site charge relay system residues include S113, D167, and H199.

This sequence belongs to the AB hydrolase superfamily. AB hydrolase 2 family.

Its function is as follows. Possesses carboxylesterase activity in vitro. In Oryza sativa subsp. japonica (Rice), this protein is Probable carboxylesterase Os04g0669600.